An 859-amino-acid chain; its full sequence is Toll-like receptor 5 (859 aa).

The first 26 residues, 1–26 (MACQLDLLIGVIFMASPVLVISPCSS), serve as a signal peptide directing secretion. Topologically, residues 27 to 641 (DGRIAFFRGC…EEEAMRSLKF (615 aa)) are extracellular. 3 N-linked (GlcNAc...) asparagine glycosylation sites follow: N37, N46, and N84. LRR repeat units follow at residues 45 to 69 (LNTTTERLLLSFNYISMVVATSFPL), 72 to 94 (RLQLLELGTQYANLTIGPGAFRN), 96 to 118 (PNLRILDLGQSQIEVLNRDAFQG), 121 to 144 (HLLELRLFSCGLSSAVLSDGYFRN), 147 to 167 (SLARLDLSGNQIHSLRLHSSF), 172 to 193 (SLSDVNFAFNQIFTICEDELEP), 198 to 212 (TLSFFGLKLTKLFSR), 215 to 230 (VGWETCRNPFRGVRLE), and 235 to 236 (SE). The N-linked (GlcNAc...) asparagine glycan is linked to N246. LRR repeat units lie at residues 261–285 (LKHHIMGPGFGFQNIRDPDQSTFAS), 290–302 (SVLQLDLSHGFIF), 314–335 (DLKMLNLAFNKINKIGENAFYG), 338–356 (SLQVLNLSYNLLGELYNSN), 386–402 (TLQTLDLRDNALKAIGF), and 413–432 (GNKLVHLPHIHFTANFLELS). An N-linked (GlcNAc...) asparagine glycan is attached at N343. N438 carries an N-linked (GlcNAc...) asparagine glycan. LRR repeat units follow at residues 450–471 (QLQFLILNQNRLSSCKAAHTPS), 475–496 (SLEQLFLTENMLQLAWETGLCW), 504–525 (RLQILYLSNNYLNFLPPGIFND), 528–547 (ALRMLSLSANKLTVLSPGSL), and 550–568 (NLEILDISRNQLLCPDPAL). Positions 580-632 (NEFVCNCELSTFISWLNQTNVTLFGSPADVYCMYPNSLLGGSLYNISTEDCDE) constitute an LRRCT domain. 2 disulfides stabilise this stretch: C584/C611 and C586/C630. Residues N596, N599, and N624 are each glycosylated (N-linked (GlcNAc...) asparagine). A helical membrane pass occupies residues 642-662 (SLFILCTVTLTLFLVITLVVI). At 663-859 (KFRGICFLCY…IQLRTIATIS (197 aa)) the chain is on the cytoplasmic side. The TIR domain occupies 692–837 (YRYDAYFCFS…WFLDKLSGCI (146 aa)). Y799 is modified (phosphotyrosine).

It belongs to the Toll-like receptor family. As to quaternary structure, homodimer. Interacts with MYD88 (via TIR domain). Interacts with TICAM1 (via TIR domain). Interacts with UNC93B1; this interaction is essential for proper TLR5 localization to the plasma membrane. Post-translationally, phosphorylated at Tyr-799 upon flagellin binding; required for signaling. As to expression, highly expressed in liver. Detected in lung and at very low levels in most other tissues.

Its subcellular location is the membrane. Pattern recognition receptor (PRR) located on the cell surface that participates in the activation of innate immunity and inflammatory response. Recognizes small molecular motifs named pathogen-associated molecular pattern (PAMPs) expressed by pathogens and microbe-associated molecular patterns (MAMPs) usually expressed by resident microbiota. Upon ligand binding such as bacterial flagellins, recruits intracellular adapter proteins MYD88 and TRIF leading to NF-kappa-B activation, cytokine secretion and induction of the inflammatory response. Plays thereby an important role in the relationship between the intestinal epithelium and enteric microbes and contributes to the gut microbiota composition throughout life. This is Toll-like receptor 5 (Tlr5) from Mus musculus (Mouse).